Here is a 443-residue protein sequence, read N- to C-terminus: Methylenetetrahydrofolate--tRNA-(uracil-5-)-methyltransferase TrmFO (443 aa).

8–13 (GAGLAG) provides a ligand contact to FAD.

The protein belongs to the MnmG family. TrmFO subfamily. FAD serves as cofactor.

The protein localises to the cytoplasm. It catalyses the reaction uridine(54) in tRNA + (6R)-5,10-methylene-5,6,7,8-tetrahydrofolate + NADH + H(+) = 5-methyluridine(54) in tRNA + (6S)-5,6,7,8-tetrahydrofolate + NAD(+). The catalysed reaction is uridine(54) in tRNA + (6R)-5,10-methylene-5,6,7,8-tetrahydrofolate + NADPH + H(+) = 5-methyluridine(54) in tRNA + (6S)-5,6,7,8-tetrahydrofolate + NADP(+). In terms of biological role, catalyzes the folate-dependent formation of 5-methyl-uridine at position 54 (M-5-U54) in all tRNAs. The polypeptide is Methylenetetrahydrofolate--tRNA-(uracil-5-)-methyltransferase TrmFO (Thermus thermophilus (strain ATCC BAA-163 / DSM 7039 / HB27)).